The sequence spans 199 residues: Recombination protein RecR (199 aa).

A C4-type zinc finger spans residues 58 to 73 (CLNCGNIGTSDICDIC). The 96-residue stretch at 81-176 (GEICVVEDVA…AVTSLAQGVP (96 aa)) folds into the Toprim domain.

Belongs to the RecR family.

Its function is as follows. May play a role in DNA repair. It seems to be involved in an RecBC-independent recombinational process of DNA repair. It may act with RecF and RecO. This chain is Recombination protein RecR, found in Dinoroseobacter shibae (strain DSM 16493 / NCIMB 14021 / DFL 12).